Consider the following 336-residue polypeptide: UDP-N-acetylenolpyruvoylglucosamine reductase (336 aa).

The region spanning 1–178 is the FAD-binding PCMH-type domain; sequence MAHSLQTLHT…TTVHLALPKE (178 aa). Arg154 is a catalytic residue. Ser222 (proton donor) is an active-site residue. Residue Glu318 is part of the active site.

This sequence belongs to the MurB family. The cofactor is FAD.

The protein resides in the cytoplasm. It carries out the reaction UDP-N-acetyl-alpha-D-muramate + NADP(+) = UDP-N-acetyl-3-O-(1-carboxyvinyl)-alpha-D-glucosamine + NADPH + H(+). It participates in cell wall biogenesis; peptidoglycan biosynthesis. Its function is as follows. Cell wall formation. The protein is UDP-N-acetylenolpyruvoylglucosamine reductase of Pseudoalteromonas translucida (strain TAC 125).